A 240-amino-acid polypeptide reads, in one-letter code: Aldehyde dehydrogenase, cytosolic 2 (240 aa).

Catalysis depends on residues Glu-8 and Cys-42. An N6-acetyllysine mark is found at Lys-106, Lys-149, Lys-151, and Lys-174.

It belongs to the aldehyde dehydrogenase family. As to quaternary structure, homotetramer. As to expression, non-lens specific, predominant form expressed in the liver.

The protein localises to the cytoplasm. It carries out the reaction an aldehyde + NAD(+) + H2O = a carboxylate + NADH + 2 H(+). It participates in alcohol metabolism; ethanol degradation; acetate from ethanol: step 2/2. In terms of biological role, elephant shrews, in contrast to other mammals, possess both a lens- and a non-lens specific class-1 aldehyde dehydrogenase. Can convert/oxidize retinaldehyde to retinoic acid. In Macroscelides proboscideus (Short-eared elephant shrew), this protein is Aldehyde dehydrogenase, cytosolic 2.